An 837-amino-acid chain; its full sequence is MGIQGLLQFIQEASEPVNVKKYKGQAVAVDTYCWLHKGAIACAEKLAKGEPTDRYVGFCMKFVNMLLSYGVKPILIFDGCTLPSKKEVERSRRERRQSNLLKGKQLLREGKVSEARDCFARSINITHAMAHKVIKAARALGVDCLVAPYEADAQLAYLNKAGIVQAVITEDSDLLAFGCKKVILKMDQFGNGLEVDQARLGMCKQLGDVFTEEKFRYMCILSGCDYLASLRGIGLAKACKVLRLANNPDIVKVIKKIGHYLRMNITVPEDYITGFIRANNTFLYQLVFDPIQRKLVPLNAYGDDVNPETLTYAGQYVGDSVALQIALGNRDVNTFEQIDDYSPDTMPAHSRSHSWNEKAGQKPPGTNSIWHKNYCPRLEVNSVSHAPQLKEKPSTLGLKQVISTKGLNLPRKSCVLKRPRNEALAEDDLLSQYSSVSKKIKENGCGDGTSPNSSKMSKSCPDSGTAHKTDAHTPSKMRNKFATFLQRRNEESGAVVVPGTRSRFFCSSQDFDNFIPKKESGQPLNETVATGKATTSLLGALDCPDTEGHKPVDANGTHNLSSQIPGNAAVSPEDEAQSSETSKLLGAMSPPSLGTLRSCFSWSGTLREFSRTPSPSASTTLQQFRRKSDPPACLPEASAVVTDRCDSKSEMLGETSQPLHELGCSSRSQESMDSSCGLNTSSLSQPSSRDSGSEESDCNNKSLDNQGEQNSKQHLPHFSKKDGLRRNKVPGLCRSSSMDSFSTTKIKPLVPARVSGLSKKSGSMQTRKHHDVENKPGLQTKISELWKNFGFKKDSEKLPSCKKPLSPVKDNIQLTPETEDEIFNKPECVRAQRAIFH.

Positions 1-99 (MGIQGLLQFI…RSRRERRQSN (99 aa)) are N-domain. 7 residues coordinate Mg(2+): Asp-30, Asp-78, Glu-150, Asp-152, Asp-171, Asp-173, and Asp-225. The segment at 129–386 (MAHKVIKAAR…RLEVNSVSHA (258 aa)) is interaction with MSH3. An I-domain region spans residues 138 to 229 (RALGVDCLVA…ILSGCDYLAS (92 aa)). Disordered stretches follow at residues 345–367 (TMPAHSRSHSWNEKAGQKPPGTN) and 440–477 (IKENGCGDGTSPNSSKMSKSCPDSGTAHKTDAHTPSKM). The interval 387 to 488 (PQLKEKPSTL…NKFATFLQRR (102 aa)) is interaction with MLH1. A compositionally biased stretch (polar residues) spans 449-462 (TSPNSSKMSKSCPD). Lys-480 is subject to N6-acetyllysine. The interval 555-589 (NGTHNLSSQIPGNAAVSPEDEAQSSETSKLLGAMS) is disordered. Residues 556–565 (GTHNLSSQIP) show a composition bias toward polar residues. A phosphoserine mark is found at Ser-589 and Ser-601. The segment at 591-837 (PSLGTLRSCF…CVRAQRAIFH (247 aa)) is interaction with MSH2. Residues 608–740 (EFSRTPSPSA…GLCRSSSMDS (133 aa)) are disordered. 3 stretches are compositionally biased toward polar residues: residues 611-623 (RTPSPSASTTLQQ), 665-690 (SSRSQESMDSSCGLNTSSLSQPSSRD), and 699-713 (NNKSLDNQGEQNSKQ). The residue at position 612 (Thr-612) is a Phosphothreonine. Phosphoserine is present on residues Ser-614 and Ser-666. Ser-737 carries the post-translational modification Phosphoserine. The interval 778-837 (LQTKISELWKNFGFKKDSEKLPSCKKPLSPVKDNIQLTPETEDEIFNKPECVRAQRAIFH) is interaction with MLH1.

This sequence belongs to the XPG/RAD2 endonuclease family. EXO1 subfamily. Interacts with the MLH1-PMS2 heterodimer via MLH1. Interacts with MSH3. Interacts with the MSH2-MSH6 heterodimer via MSH2, and this interaction may increase the processivity of the 5'-&gt;3' exonuclease activity. Interacts with PCNA, and this interaction may both stimulate the cryptic 3'-&gt;5' exonuclease activity and suppress the 5'-&gt;3' exonuclease activity. Interacts with WRN, and this interaction stimulates both the 5'-&gt;3' exonuclease activity and cleavage of 5'-overhanging flap structures. Interacts with RECQL/RECQ1, and this interaction stimulates cleavage of 5'-overhanging flap structures. Interacts with DNA helicase ZGRF1; the interaction is increased following DNA damage induction. Requires Mg(2+) as cofactor. In terms of processing, phosphorylated upon DNA damage and in response to agents stalling DNA replication, probably by ATM or ATR. As to expression, highly expressed in the spleen and testis. Also expressed in the bone marrow, brain, lung, lymph node and thymus.

The protein localises to the nucleus. In terms of biological role, 5'-&gt;3' double-stranded DNA exonuclease which may also possess a cryptic 3'-&gt;5' double-stranded DNA exonuclease activity. Functions in DNA mismatch repair (MMR) to excise mismatch-containing DNA tracts directed by strand breaks located either 5' or 3' to the mismatch. Also exhibits endonuclease activity against 5'-overhanging flap structures similar to those generated by displacement synthesis when DNA polymerase encounters the 5'-end of a downstream Okazaki fragment. Required for somatic hypermutation (SHM) and class switch recombination (CSR) of immunoglobulin genes. Essential for male and female meiosis. The polypeptide is Exonuclease 1 (Exo1) (Mus musculus (Mouse)).